A 456-amino-acid polypeptide reads, in one-letter code: Phosphomethylpyrimidine synthase (456 aa).

Substrate is bound by residues Asn-80, Met-109, Tyr-139, His-175, 195 to 197 (SRG), 236 to 239 (DSLR), and Glu-275. Residue His-279 coordinates Zn(2+). Tyr-302 contributes to the substrate binding site. Zn(2+) is bound at residue His-343. Cys-423, Cys-426, and Cys-431 together coordinate [4Fe-4S] cluster.

Belongs to the ThiC family. [4Fe-4S] cluster serves as cofactor.

It catalyses the reaction 5-amino-1-(5-phospho-beta-D-ribosyl)imidazole + S-adenosyl-L-methionine = 4-amino-2-methyl-5-(phosphooxymethyl)pyrimidine + CO + 5'-deoxyadenosine + formate + L-methionine + 3 H(+). It participates in cofactor biosynthesis; thiamine diphosphate biosynthesis. Its function is as follows. Catalyzes the synthesis of the hydroxymethylpyrimidine phosphate (HMP-P) moiety of thiamine from aminoimidazole ribotide (AIR) in a radical S-adenosyl-L-methionine (SAM)-dependent reaction. This is Phosphomethylpyrimidine synthase from Prochlorococcus marinus (strain AS9601).